The chain runs to 213 residues: dITP/XTP pyrophosphatase (213 aa).

17-22 (SNNAGK) contributes to the substrate binding site. The active-site Proton acceptor is Asp78. Asp78 contributes to the Mg(2+) binding site. Substrate contacts are provided by residues Ser79, 164 to 167 (FGYD), Lys187, and 192 to 193 (HR).

The protein belongs to the HAM1 NTPase family. As to quaternary structure, homodimer. It depends on Mg(2+) as a cofactor.

The enzyme catalyses XTP + H2O = XMP + diphosphate + H(+). It catalyses the reaction dITP + H2O = dIMP + diphosphate + H(+). The catalysed reaction is ITP + H2O = IMP + diphosphate + H(+). Pyrophosphatase that catalyzes the hydrolysis of nucleoside triphosphates to their monophosphate derivatives, with a high preference for the non-canonical purine nucleotides XTP (xanthosine triphosphate), dITP (deoxyinosine triphosphate) and ITP. Seems to function as a house-cleaning enzyme that removes non-canonical purine nucleotides from the nucleotide pool, thus preventing their incorporation into DNA/RNA and avoiding chromosomal lesions. The polypeptide is dITP/XTP pyrophosphatase (Bordetella parapertussis (strain 12822 / ATCC BAA-587 / NCTC 13253)).